The sequence spans 873 residues: Leucine--tRNA ligase (873 aa).

Positions 48 to 58 (PYPSGKLHMGH) match the 'HIGH' region motif. The 'KMSKS' region signature appears at 636-640 (KMSKS). An ATP-binding site is contributed by Lys639.

Belongs to the class-I aminoacyl-tRNA synthetase family.

Its subcellular location is the cytoplasm. It catalyses the reaction tRNA(Leu) + L-leucine + ATP = L-leucyl-tRNA(Leu) + AMP + diphosphate. This chain is Leucine--tRNA ligase, found in Cupriavidus pinatubonensis (strain JMP 134 / LMG 1197) (Cupriavidus necator (strain JMP 134)).